Reading from the N-terminus, the 442-residue chain is GTPase Der (442 aa).

2 consecutive EngA-type G domains span residues 3–167 and 177–350; these read PTIV…PADD and PRVA…AAAM. GTP contacts are provided by residues 9 to 16, 56 to 60, 119 to 122, 183 to 190, 230 to 234, and 295 to 298; these read GRPNVGKS, DTAGF, NKAE, DTAGL, and NKWD. Residues 351-435 enclose the KH-like domain; that stretch reads SNLSTPRLTR…PLRIQFRTAH (85 aa).

This sequence belongs to the TRAFAC class TrmE-Era-EngA-EngB-Septin-like GTPase superfamily. EngA (Der) GTPase family. Associates with the 50S ribosomal subunit.

Functionally, GTPase that plays an essential role in the late steps of ribosome biogenesis. The protein is GTPase Der of Azoarcus sp. (strain BH72).